A 283-amino-acid chain; its full sequence is Pantothenate synthetase (283 aa).

Position 31–38 (31–38) interacts with ATP; it reads MGALHDGH. Histidine 38 (proton donor) is an active-site residue. Residue glutamine 62 participates in (R)-pantoate binding. Glutamine 62 contacts beta-alanine. 148 to 151 is an ATP binding site; sequence GKKD. Residue glutamine 154 coordinates (R)-pantoate. ATP contacts are provided by residues valine 177 and 185–188; that span reads KSSR.

It belongs to the pantothenate synthetase family. As to quaternary structure, homodimer.

The protein localises to the cytoplasm. The catalysed reaction is (R)-pantoate + beta-alanine + ATP = (R)-pantothenate + AMP + diphosphate + H(+). The protein operates within cofactor biosynthesis; (R)-pantothenate biosynthesis; (R)-pantothenate from (R)-pantoate and beta-alanine: step 1/1. In terms of biological role, catalyzes the condensation of pantoate with beta-alanine in an ATP-dependent reaction via a pantoyl-adenylate intermediate. This Staphylococcus aureus (strain bovine RF122 / ET3-1) protein is Pantothenate synthetase.